The sequence spans 349 residues: Hydroxymethylglutaryl-CoA synthase (349 aa).

2 residues coordinate (3S)-3-hydroxy-3-methylglutaryl-CoA: Asp-30 and Ala-31. Glu-82 acts as the Proton donor/acceptor in catalysis. (3S)-3-hydroxy-3-methylglutaryl-CoA-binding residues include Cys-114 and Thr-155. The active-site Acyl-thioester intermediate is the Cys-114. Arg-203 serves as a coordination point for CoA. (3S)-3-hydroxy-3-methylglutaryl-CoA contacts are provided by Thr-205 and His-238. His-238 (proton donor/acceptor) is an active-site residue. Residue Lys-243 coordinates CoA. Asn-270 and Ser-300 together coordinate (3S)-3-hydroxy-3-methylglutaryl-CoA.

Belongs to the thiolase-like superfamily. Archaeal HMG-CoA synthase family. As to quaternary structure, interacts with acetoacetyl-CoA thiolase that catalyzes the precedent step in the pathway and with a DUF35 protein. The acetoacetyl-CoA thiolase/HMG-CoA synthase complex channels the intermediate via a fused CoA-binding site, which allows for efficient coupling of the endergonic thiolase reaction with the exergonic HMGCS reaction.

The catalysed reaction is acetoacetyl-CoA + acetyl-CoA + H2O = (3S)-3-hydroxy-3-methylglutaryl-CoA + CoA + H(+). The protein operates within metabolic intermediate biosynthesis; (R)-mevalonate biosynthesis; (R)-mevalonate from acetyl-CoA: step 2/3. Its function is as follows. Catalyzes the condensation of acetyl-CoA with acetoacetyl-CoA to form 3-hydroxy-3-methylglutaryl-CoA (HMG-CoA). Functions in the mevalonate (MVA) pathway leading to isopentenyl diphosphate (IPP), a key precursor for the biosynthesis of isoprenoid compounds that are building blocks of archaeal membrane lipids. The protein is Hydroxymethylglutaryl-CoA synthase of Methanococcus vannielii (strain ATCC 35089 / DSM 1224 / JCM 13029 / OCM 148 / SB).